We begin with the raw amino-acid sequence, 176 residues long: Inorganic pyrophosphatase (176 aa).

Substrate contacts are provided by Lys30, Arg44, and Tyr56. Residues Asp66, Asp71, and Asp103 each contribute to the Mg(2+) site. Residue Tyr142 coordinates substrate.

It belongs to the PPase family. As to quaternary structure, homohexamer. Requires Mg(2+) as cofactor.

The protein localises to the cytoplasm. It catalyses the reaction diphosphate + H2O = 2 phosphate + H(+). Catalyzes the hydrolysis of inorganic pyrophosphate (PPi) forming two phosphate ions. The polypeptide is Inorganic pyrophosphatase (Vibrio cholerae serotype O1 (strain ATCC 39315 / El Tor Inaba N16961)).